The chain runs to 218 residues: Glutathione S-transferase Mu 6 (218 aa).

In terms of domain architecture, GST N-terminal spans 1–88 (MPVTLGYWDI…YLGRKHNLCG (88 aa)). Residues 7-8 (YW), 46-50 (WLNDK), 59-60 (NL), and 72-73 (QS) contribute to the glutathione site. A GST C-terminal domain is found at 90–208 (TEEERIRVDI…KTSRFLPSPV (119 aa)). Y116 contacts substrate.

The protein belongs to the GST superfamily. Mu family. As to quaternary structure, homodimer. As to expression, expressed in liver, stomach and small intestine. Not expressed in spleen, kidney, colon, heart, muscle, brain or lung.

The protein localises to the cytoplasm. The catalysed reaction is RX + glutathione = an S-substituted glutathione + a halide anion + H(+). Conjugation of reduced glutathione to a wide number of exogenous and endogenous hydrophobic electrophiles. The sequence is that of Glutathione S-transferase Mu 6 (Gstm6) from Mus musculus (Mouse).